The chain runs to 824 residues: Sphingomyelin phosphodiesterase 4 (824 aa).

Residues 777-797 (LAFLFIFYILGSLLSLGPLIC) traverse the membrane as a helical segment.

Mg(2+) serves as cofactor.

It localises to the endoplasmic reticulum membrane. The protein localises to the golgi apparatus membrane. The protein resides in the nucleus envelope. Its subcellular location is the cell membrane. It is found in the sarcolemma. It catalyses the reaction a sphingomyelin + H2O = phosphocholine + an N-acylsphing-4-enine + H(+). Catalyzes the hydrolysis of membrane sphingomyelin to form phosphorylcholine and ceramide. It has a relevant role in the homeostasis of membrane sphingolipids, thereby influencing membrane integrity, and endoplasmic reticulum organization and function. May sensitize cells to DNA damage-induced apoptosis. The sequence is that of Sphingomyelin phosphodiesterase 4 (smpd4) from Xenopus laevis (African clawed frog).